We begin with the raw amino-acid sequence, 513 residues long: ATP synthase subunit alpha (513 aa).

Residue 169-176 coordinates ATP; that stretch reads GDRQIGKT.

Belongs to the ATPase alpha/beta chains family. As to quaternary structure, F-type ATPases have 2 components, CF(1) - the catalytic core - and CF(0) - the membrane proton channel. CF(1) has five subunits: alpha(3), beta(3), gamma(1), delta(1), epsilon(1). CF(0) has three main subunits: a(1), b(2) and c(9-12). The alpha and beta chains form an alternating ring which encloses part of the gamma chain. CF(1) is attached to CF(0) by a central stalk formed by the gamma and epsilon chains, while a peripheral stalk is formed by the delta and b chains.

The protein resides in the cell inner membrane. It catalyses the reaction ATP + H2O + 4 H(+)(in) = ADP + phosphate + 5 H(+)(out). In terms of biological role, produces ATP from ADP in the presence of a proton gradient across the membrane. The alpha chain is a regulatory subunit. This is ATP synthase subunit alpha from Shewanella sediminis (strain HAW-EB3).